Consider the following 210-residue polypeptide: Thiamine-phosphate synthase (210 aa).

4-amino-2-methyl-5-(diphosphooxymethyl)pyrimidine-binding positions include 39-43 (QLREK) and asparagine 71. The Mg(2+) site is built by aspartate 72 and aspartate 91. Position 110 (serine 110) interacts with 4-amino-2-methyl-5-(diphosphooxymethyl)pyrimidine. 134-136 (TPT) serves as a coordination point for 2-[(2R,5Z)-2-carboxy-4-methylthiazol-5(2H)-ylidene]ethyl phosphate. Residue lysine 137 coordinates 4-amino-2-methyl-5-(diphosphooxymethyl)pyrimidine. Glycine 163 is a 2-[(2R,5Z)-2-carboxy-4-methylthiazol-5(2H)-ylidene]ethyl phosphate binding site.

The protein belongs to the thiamine-phosphate synthase family. Mg(2+) serves as cofactor.

It carries out the reaction 2-[(2R,5Z)-2-carboxy-4-methylthiazol-5(2H)-ylidene]ethyl phosphate + 4-amino-2-methyl-5-(diphosphooxymethyl)pyrimidine + 2 H(+) = thiamine phosphate + CO2 + diphosphate. The catalysed reaction is 2-(2-carboxy-4-methylthiazol-5-yl)ethyl phosphate + 4-amino-2-methyl-5-(diphosphooxymethyl)pyrimidine + 2 H(+) = thiamine phosphate + CO2 + diphosphate. The enzyme catalyses 4-methyl-5-(2-phosphooxyethyl)-thiazole + 4-amino-2-methyl-5-(diphosphooxymethyl)pyrimidine + H(+) = thiamine phosphate + diphosphate. The protein operates within cofactor biosynthesis; thiamine diphosphate biosynthesis; thiamine phosphate from 4-amino-2-methyl-5-diphosphomethylpyrimidine and 4-methyl-5-(2-phosphoethyl)-thiazole: step 1/1. Its function is as follows. Condenses 4-methyl-5-(beta-hydroxyethyl)thiazole monophosphate (THZ-P) and 2-methyl-4-amino-5-hydroxymethyl pyrimidine pyrophosphate (HMP-PP) to form thiamine monophosphate (TMP). The sequence is that of Thiamine-phosphate synthase from Campylobacter jejuni (strain RM1221).